A 671-amino-acid polypeptide reads, in one-letter code: DNA ligase (671 aa).

Residues 32–36, 81–82, and E113 each bind NAD(+); these read DAEYD and SL. K115 functions as the N6-AMP-lysine intermediate in the catalytic mechanism. R136, E173, K290, and K314 together coordinate NAD(+). Zn(2+)-binding residues include C408, C411, C426, and C432. The BRCT domain occupies 593-671; it reads EIDSPFAGKT…ETEMLRLLGS (79 aa).

The protein belongs to the NAD-dependent DNA ligase family. LigA subfamily. Mg(2+) is required as a cofactor. Mn(2+) serves as cofactor.

The enzyme catalyses NAD(+) + (deoxyribonucleotide)n-3'-hydroxyl + 5'-phospho-(deoxyribonucleotide)m = (deoxyribonucleotide)n+m + AMP + beta-nicotinamide D-nucleotide.. DNA ligase that catalyzes the formation of phosphodiester linkages between 5'-phosphoryl and 3'-hydroxyl groups in double-stranded DNA using NAD as a coenzyme and as the energy source for the reaction. It is essential for DNA replication and repair of damaged DNA. The chain is DNA ligase from Escherichia fergusonii (strain ATCC 35469 / DSM 13698 / CCUG 18766 / IAM 14443 / JCM 21226 / LMG 7866 / NBRC 102419 / NCTC 12128 / CDC 0568-73).